We begin with the raw amino-acid sequence, 227 residues long: Cytochrome c oxidase subunit 2 (227 aa).

The Mitochondrial intermembrane portion of the chain corresponds to 1 to 14 (MAYPVQLGFQDAAS). The helical transmembrane segment at 15–45 (PIMEELLYFHDHTLMIMFLISSLVLYIISLM) threads the bilayer. Over 46–59 (LTTELMHTNTMDAQ) the chain is Mitochondrial matrix. A helical transmembrane segment spans residues 60–87 (EVETVWTILPAAILILIALPSLRILYMM). The Mitochondrial intermembrane segment spans residues 88-227 (DEITTPSLTL…HFEEWLLSML (140 aa)). Cu cation is bound by residues His161, Cys196, Glu198, Cys200, His204, and Met207. Residue Glu198 participates in Mg(2+) binding.

The protein belongs to the cytochrome c oxidase subunit 2 family. As to quaternary structure, component of the cytochrome c oxidase (complex IV, CIV), a multisubunit enzyme composed of 14 subunits. The complex is composed of a catalytic core of 3 subunits MT-CO1, MT-CO2 and MT-CO3, encoded in the mitochondrial DNA, and 11 supernumerary subunits COX4I, COX5A, COX5B, COX6A, COX6B, COX6C, COX7A, COX7B, COX7C, COX8 and NDUFA4, which are encoded in the nuclear genome. The complex exists as a monomer or a dimer and forms supercomplexes (SCs) in the inner mitochondrial membrane with NADH-ubiquinone oxidoreductase (complex I, CI) and ubiquinol-cytochrome c oxidoreductase (cytochrome b-c1 complex, complex III, CIII), resulting in different assemblies (supercomplex SCI(1)III(2)IV(1) and megacomplex MCI(2)III(2)IV(2)). Found in a complex with TMEM177, COA6, COX18, COX20, SCO1 and SCO2. Interacts with TMEM177 in a COX20-dependent manner. Interacts with COX20. Interacts with COX16. The cofactor is Cu cation.

The protein resides in the mitochondrion inner membrane. It carries out the reaction 4 Fe(II)-[cytochrome c] + O2 + 8 H(+)(in) = 4 Fe(III)-[cytochrome c] + 2 H2O + 4 H(+)(out). Component of the cytochrome c oxidase, the last enzyme in the mitochondrial electron transport chain which drives oxidative phosphorylation. The respiratory chain contains 3 multisubunit complexes succinate dehydrogenase (complex II, CII), ubiquinol-cytochrome c oxidoreductase (cytochrome b-c1 complex, complex III, CIII) and cytochrome c oxidase (complex IV, CIV), that cooperate to transfer electrons derived from NADH and succinate to molecular oxygen, creating an electrochemical gradient over the inner membrane that drives transmembrane transport and the ATP synthase. Cytochrome c oxidase is the component of the respiratory chain that catalyzes the reduction of oxygen to water. Electrons originating from reduced cytochrome c in the intermembrane space (IMS) are transferred via the dinuclear copper A center (CU(A)) of subunit 2 and heme A of subunit 1 to the active site in subunit 1, a binuclear center (BNC) formed by heme A3 and copper B (CU(B)). The BNC reduces molecular oxygen to 2 water molecules using 4 electrons from cytochrome c in the IMS and 4 protons from the mitochondrial matrix. This is Cytochrome c oxidase subunit 2 (MT-CO2) from Hapalemur griseus (Gray gentle lemur).